Consider the following 520-residue polypeptide: MSESGHSQPGLYGIERRRRWKEPGSSGPQNLSGPGGRERDYIAPWERERRDGSEDPSTNVMQKTPIILSKPPAERSKQPPPSTAPAAPPAPAPLEKPIVLMKPREEGKGPVAGTGASTPEGTAPPPPTAPAPPKGEKEGQRPTQPVYQIQNRGMGTAAPTAMDPVVGQAKLLPPERMKHSIKLVDDQMNWCDSAIEYLLDQTDVLVVGVLGLQGTGKSMVMSLLSANTPEEDQRAYVFRAQSAEMKERGGNQTSGIDFFITQERIVFLDTQPILSPSILDHLINNDRKLPPEYNLPHTYVEMQSLQIAAFLFTVCHVVIVVQDWFTDLSLYRFLQTAEMVKPSTPSPSHESSSSAGSDEGTEYYPHLVFLQNKARREDFCPRKLRQMHLMIDQLMAHSHLRYKGTLSMLQCNVFPGLPPDFLDAEVNLFLVPFMDSEAENENPPRAGPGSSPLFSLLPGYRGHPSFQSLVSKLRSQVMSMARPQLSHTILTEKNWFHYAARIWDGVKKSSALAEYSRLLA.

Residues 1–143 are disordered; it reads MSESGHSQPG…KGEKEGQRPT (143 aa). Ser2 bears the N-acetylserine mark. Phosphoserine occurs at positions 2, 4, 7, 32, and 53. Residues 36–53 show a composition bias toward basic and acidic residues; it reads GRERDYIAPWERERRDGS. Composition is skewed to pro residues over residues 78-94 and 122-133; these read QPPP…PAPL and TAPPPPTAPAPP. Ser451 bears the Phosphoserine mark.

Belongs to the SMG9 family. In terms of assembly, self-associates to form homodimers and forms heterodimers with SMG8; these assembly forms may represent SMG1C intermediate forms. Component of the SMG1C complex composed of SMG1, SMG8 and SMG9. Interacts with DHX34; the interaction is RNA-independent. Post-translationally, phosphorylated by SMG1.

Involved in nonsense-mediated decay (NMD) of mRNAs containing premature stop codons. Is recruited by release factors to stalled ribosomes together with SMG1 and SMG8 (forming the SMG1C protein kinase complex) and, in the SMG1C complex, is required for the efficient association between SMG1 and SMG8. Plays a role in brain, heart, and eye development. In Mus musculus (Mouse), this protein is Nonsense-mediated mRNA decay factor SMG9.